Here is a 93-residue protein sequence, read N- to C-terminus: Small ribosomal subunit protein bS20 (93 aa).

Residues 72–93 (KNTASRKKSRLTRKFNSVYKAS) are disordered. Over residues 74-84 (TASRKKSRLTR) the composition is skewed to basic residues.

It belongs to the bacterial ribosomal protein bS20 family.

Its function is as follows. Binds directly to 16S ribosomal RNA. The sequence is that of Small ribosomal subunit protein bS20 from Carboxydothermus hydrogenoformans (strain ATCC BAA-161 / DSM 6008 / Z-2901).